A 221-amino-acid chain; its full sequence is Ribosome maturation factor RimM (221 aa).

The segment at 1 to 23 (MTERKQGAAAPRPLNRPQGESPK) is disordered. The region spanning 144 to 221 (ENEFYWVDLI…RIVVDWGLDY (78 aa)) is the PRC barrel domain.

The protein belongs to the RimM family. In terms of assembly, binds ribosomal protein uS19.

It localises to the cytoplasm. In terms of biological role, an accessory protein needed during the final step in the assembly of 30S ribosomal subunit, possibly for assembly of the head region. Essential for efficient processing of 16S rRNA. May be needed both before and after RbfA during the maturation of 16S rRNA. It has affinity for free ribosomal 30S subunits but not for 70S ribosomes. This chain is Ribosome maturation factor RimM, found in Cupriavidus pinatubonensis (strain JMP 134 / LMG 1197) (Cupriavidus necator (strain JMP 134)).